A 546-amino-acid polypeptide reads, in one-letter code: Phosphatidylinositol 4-phosphate 5-kinase type-1 alpha (546 aa).

A PIPK domain is found at 65–433; that stretch reads TSSALKGAIQ…RFQRFMCNTV (369 aa). Lys-87 is covalently cross-linked (Glycyl lysine isopeptide (Lys-Gly) (interchain with G-Cter in ubiquitin)). Residues 441-522 form a disordered region; the sequence is PSPTKKFRSG…PGPSFSPAVG (82 aa). The span at 449 to 461 shows a compositional bias: low complexity; sequence SGPSFSRRSGPSG. Polar residues predominate over residues 462–471; sequence NSCTPSQPTA. The segment covering 473-493 has biased composition (basic and acidic residues); the sequence is GEHKAQVTTKAEVEPDIHLGR.

As to quaternary structure, interacts with RAC1. Interacts with TUT1. Forms a complex with CDH1/E-cadherin, CTNNB1/beta-catenin and CTNND1 at the plasma membrane upon calcium stimulation. Found in a ternary complex with IRS1 and DGKZ in the absence of insulin stimulation. Interacts with DGKZ. Interacts with PIP4K2C; the interaction inhibits PIP5K1A kinase activity.

Its subcellular location is the cell membrane. It localises to the cytoplasm. It is found in the nucleus. The protein localises to the nucleus speckle. The protein resides in the cell projection. Its subcellular location is the ruffle. It localises to the lamellipodium. It carries out the reaction a 1,2-diacyl-sn-glycero-3-phospho-(1D-myo-inositol 4-phosphate) + ATP = a 1,2-diacyl-sn-glycero-3-phospho-(1D-myo-inositol-4,5-bisphosphate) + ADP + H(+). The catalysed reaction is 1-octadecanoyl-2-(5Z,8Z,11Z,14Z)-eicosatetraenoyl-sn-glycero-3-phospho-1D-myo-inositol 4-phosphate + ATP = 1-octadecanoyl-2-(5Z,8Z,11Z,14Z)-eicosatetraenoyl-sn-glycero-3-phospho-1D-myo-inositol 4,5-bisphosphate + ADP + H(+). The enzyme catalyses 1,2-dihexadecanoyl-sn-glycero-3-phospho-(1D-myo-inositol-4-phosphate) + ATP = 1,2-dihexadecanoyl-sn-glycero-3-phospho-(1D-myo-inositol-4,5-bisphosphate) + ADP + H(+). It catalyses the reaction 1-octadecanoyl-2-(9Z)-octadecenoyl-sn-glycero-3-phospho-1D-myo-inositol 4-phosphate + ATP = 1-octadecanoyl-2-(9Z)-octadecenoyl-sn-glycero-3-phospho-1D-myo-inositol 4,5-bisphosphate + ADP + H(+). It carries out the reaction 1-octadecanoyl-2-(9Z)-octadecenoyl-sn-glycero-3-phospho-1D-myo-inositol + ATP = 1-octadecanoyl-2-(9Z)-octadecenoyl-sn-glycero-3-phospho-1D-myo-inositol 5-phosphate + ADP + H(+). The catalysed reaction is 1-octadecanoyl-2-(9Z,12Z)-octadecadienoyl-sn-glycero-3-phospho-1D-myo-inositol + ATP = 1-octadecanoyl-2-(9Z,12Z)-octadecadienoyl-sn-glycero-3-phospho-1D-myo-inositol 5-phosphate + ADP + H(+). The enzyme catalyses 1-octadecanoyl-2-(5Z,8Z,11Z,14Z-eicosatetraenoyl)-sn-glycero-3-phospho-(1D-myo-inositol) + ATP = 1-octadecanoyl-2-(5Z,8Z,11Z,14Z)-eicosatetraenoyl-sn-glycero-3-phospho-1D-myo-inositol 5-phosphate + ADP + H(+). It catalyses the reaction 1,2-di-(9Z,12Z)-octadecadienoyl-sn-glycero-3-phospho-1D-myo-inositol + ATP = 1,2-di(9Z,12Z)-octadecadienoyl-sn-glycero-3-phospho-1D-myo-inositol 5-phosphate + ADP + H(+). Its function is as follows. Catalyzes the phosphorylation of phosphatidylinositol 4-phosphate (PtdIns(4)P/PI4P) to form phosphatidylinositol 4,5-bisphosphate (PtdIns(4,5)P2/PIP2), a lipid second messenger that regulates several cellular processes such as signal transduction, vesicle trafficking, actin cytoskeleton dynamics, cell adhesion, and cell motility. PtdIns(4,5)P2 can directly act as a second messenger or can be utilized as a precursor to generate other second messengers: inositol 1,4,5-trisphosphate (IP3), diacylglycerol (DAG) or phosphatidylinositol-3,4,5-trisphosphate (PtdIns(3,4,5)P3/PIP3). PIP5K1A-mediated phosphorylation of PtdIns(4)P is the predominant pathway for PtdIns(4,5)P2 synthesis. Can also use phosphatidylinositol (PtdIns) as substrate in vitro. Together with PIP5K1C, is required for phagocytosis, both enzymes regulating different types of actin remodeling at sequential steps. Promotes particle ingestion by activating the WAS GTPase-binding protein that induces Arp2/3 dependent actin polymerization at the nascent phagocytic cup. Together with PIP5K1B, is required, after stimulation by G-protein coupled receptors, for the synthesis of IP3 that will induce stable platelet adhesion. Recruited to the plasma membrane by the E-cadherin/beta-catenin complex where it provides the substrate PtdIns(4,5)P2 for the production of PtdIns(3,4,5)P3, IP3 and DAG, that will mobilize internal calcium and drive keratinocyte differentiation. Positively regulates insulin-induced translocation of SLC2A4 to the cell membrane in adipocytes. Together with PIP5K1C has a role during embryogenesis. Independently of its catalytic activity, is required for membrane ruffling formation, actin organization and focal adhesion formation during directional cell migration by controlling integrin-induced translocation of the small GTPase RAC1 to the plasma membrane. Also functions in the nucleus where it acts as an activator of TUT1 adenylyltransferase activity in nuclear speckles, thereby regulating mRNA polyadenylation of a select set of mRNAs. The chain is Phosphatidylinositol 4-phosphate 5-kinase type-1 alpha from Rattus norvegicus (Rat).